We begin with the raw amino-acid sequence, 191 residues long: Ribonuclease HII (191 aa).

Positions 7–191 (ILMAGVDEVG…YSPVADLISK (185 aa)) constitute an RNase H type-2 domain. A divalent metal cation is bound by residues aspartate 13, glutamate 14, and aspartate 103.

It belongs to the RNase HII family. Requires Mn(2+) as cofactor. The cofactor is Mg(2+).

The protein localises to the cytoplasm. The catalysed reaction is Endonucleolytic cleavage to 5'-phosphomonoester.. In terms of biological role, endonuclease that specifically degrades the RNA of RNA-DNA hybrids. This Legionella pneumophila subsp. pneumophila (strain Philadelphia 1 / ATCC 33152 / DSM 7513) protein is Ribonuclease HII.